We begin with the raw amino-acid sequence, 239 residues long: 2-C-methyl-D-erythritol 4-phosphate cytidylyltransferase (239 aa).

It belongs to the IspD/TarI cytidylyltransferase family. IspD subfamily. As to quaternary structure, homodimer.

It catalyses the reaction 2-C-methyl-D-erythritol 4-phosphate + CTP + H(+) = 4-CDP-2-C-methyl-D-erythritol + diphosphate. Its pathway is isoprenoid biosynthesis; isopentenyl diphosphate biosynthesis via DXP pathway; isopentenyl diphosphate from 1-deoxy-D-xylulose 5-phosphate: step 2/6. Catalyzes the formation of 4-diphosphocytidyl-2-C-methyl-D-erythritol from CTP and 2-C-methyl-D-erythritol 4-phosphate (MEP). The protein is 2-C-methyl-D-erythritol 4-phosphate cytidylyltransferase of Sodalis glossinidius (strain morsitans).